Reading from the N-terminus, the 339-residue chain is Phenylalanine--tRNA ligase alpha subunit (339 aa).

A Mg(2+)-binding site is contributed by Glu-250.

It belongs to the class-II aminoacyl-tRNA synthetase family. Phe-tRNA synthetase alpha subunit type 1 subfamily. Tetramer of two alpha and two beta subunits. It depends on Mg(2+) as a cofactor.

It is found in the cytoplasm. The enzyme catalyses tRNA(Phe) + L-phenylalanine + ATP = L-phenylalanyl-tRNA(Phe) + AMP + diphosphate + H(+). This is Phenylalanine--tRNA ligase alpha subunit from Bacteroides fragilis (strain ATCC 25285 / DSM 2151 / CCUG 4856 / JCM 11019 / LMG 10263 / NCTC 9343 / Onslow / VPI 2553 / EN-2).